A 778-amino-acid polypeptide reads, in one-letter code: Pentatricopeptide repeat-containing protein At3g09650, chloroplastic (778 aa).

A chloroplast-targeting transit peptide spans 1 to 65 (MNILRPPTSS…RSASGTANSS (65 aa)). PPR repeat units follow at residues 235–269 (DTAA…DCEP), 270–304 (DVLT…GIKV), and 305–339 (CMTT…RRDL). The interval 351 to 381 (LKEKEEEEAEDDEDAFEDDEDSGYSARDEVS) is disordered. Residues 355–372 (EEEEAEDDEDAFEDDEDS) show a composition bias toward acidic residues. PPR repeat units lie at residues 413–443 (DSRI…MRRQ), 451–485 (DEVT…GVPA), 486–521 (NRIT…GIEP), 522–556 (DVVS…GIAP), 557–587 (TKIS…MMND), 593–627 (DLIA…GFYP), and 628–658 (NVAT…IKER).

Belongs to the PPR family. P subfamily.

It localises to the plastid. Its subcellular location is the chloroplast stroma. In terms of biological role, involved in the processing of polycistronic chloroplast psbB-psbT-psbH-petB-petD transcript. Could bind RNA. In Arabidopsis thaliana (Mouse-ear cress), this protein is Pentatricopeptide repeat-containing protein At3g09650, chloroplastic (HCF152).